The following is a 147-amino-acid chain: Mid1-interacting protein 1-B (147 aa).

This sequence belongs to the SPOT14 family.

Its subcellular location is the nucleus. The protein localises to the cytoplasm. The protein resides in the cytoskeleton. In terms of biological role, involved in stabilization of microtubules. May play a role in the regulation of lipogenesis. The polypeptide is Mid1-interacting protein 1-B (Danio rerio (Zebrafish)).